A 453-amino-acid polypeptide reads, in one-letter code: MIGFSFSIVTSWSALSGVLVVGVESGGPPVMIWSWVGVCAVSLAVAYSMAEMCSAYPVAGGQYSWVAILAPKKWARGLSYVCGWFMLIGILSMGAVNNFIAGNFVLGMANLTYPEYTIERWHAVLVAYLICIVAALSSIFLPHLLNRISKAILIWNICSFFICFITILATNDHKQPASFVFADFQNSTGFNKAYAAIIGILQSAFGMCCYDAPAHMTEEIKDARKQAPRAIVMSVWLGFLTGFVFLISLCFCMGGIDETASTPTGVPLIAIFHNSTGSVAGTCALTSLITVVALVCANSLMTEGGRAVYAFARDRGLPFSRALSRVHPTLGVPVAGILATAAVQAAFNSIYFGTVTGFNTVISIATEGFYVSYAIPLLVRILSRVSGDKRERLDGPYSLGRWGLLANVVGFTYLAFAVITFNFPTVDPVDKENMNYTSAASFKFIQDISNQAE.

3 consecutive transmembrane segments (helical) span residues 2–21 (IGFSFSIVTSWSALSGVLVV), 30–50 (VMIWSWVGVCAVSLAVAYSMA), and 81–101 (VCGWFMLIGILSMGAVNNFIA). A glycan (N-linked (GlcNAc...) asparagine) is linked at Asn110. Helical transmembrane passes span 121-141 (WHAVLVAYLICIVAALSSIFL) and 151-171 (AILIWNICSFFICFITILATN). N-linked (GlcNAc...) asparagine glycosylation is present at Asn186. Helical transmembrane passes span 193–213 (AYAAIIGILQSAFGMCCYDAP) and 231–251 (IVMSVWLGFLTGFVFLISLCF). N-linked (GlcNAc...) asparagine glycosylation is present at Asn274. A run of 4 helical transmembrane segments spans residues 277-297 (GSVAGTCALTSLITVVALVCA), 330-350 (LGVPVAGILATAAVQAAFNSI), 358-378 (FNTVISIATEGFYVSYAIPLL), and 403-423 (GLLANVVGFTYLAFAVITFNF). Residue Asn435 is glycosylated (N-linked (GlcNAc...) asparagine).

Belongs to the amino acid-polyamine-organocation (APC) superfamily.

The protein localises to the membrane. This Macrophomina phaseolina (strain MS6) (Charcoal rot fungus) protein is Putative amino acid/polyamine transporter MPH_07630_2.